A 222-amino-acid polypeptide reads, in one-letter code: Ribose-5-phosphate isomerase A (222 aa).

Substrate is bound by residues 29–32, 82–85, and 95–98; these read TGST, DSAD, and KGGG. Residue E104 is the Proton acceptor of the active site. K122 lines the substrate pocket.

It belongs to the ribose 5-phosphate isomerase family. In terms of assembly, homodimer.

It carries out the reaction aldehydo-D-ribose 5-phosphate = D-ribulose 5-phosphate. The protein operates within carbohydrate degradation; pentose phosphate pathway; D-ribose 5-phosphate from D-ribulose 5-phosphate (non-oxidative stage): step 1/1. Its function is as follows. Catalyzes the reversible conversion of ribose-5-phosphate to ribulose 5-phosphate. In Blochmanniella floridana, this protein is Ribose-5-phosphate isomerase A.